The chain runs to 223 residues: N-terminal Xaa-Pro-Lys N-methyltransferase 1 (223 aa).

The residue at position 1 (Met-1) is an N-acetylmethionine. Residue Thr-2 is modified to N-acetylthreonine; in N-terminal Xaa-Pro-Lys N-methyltransferase 1, N-terminally processed. S-adenosyl-L-methionine is bound by residues Gly-69, Arg-74, 91–93, 119–120, and Gln-135; these read DIT and LQ.

It belongs to the methyltransferase superfamily. NTM1 family.

The protein resides in the nucleus. It carries out the reaction N-terminal L-alanyl-L-prolyl-L-lysyl-[protein] + 3 S-adenosyl-L-methionine = N-terminal N,N,N-trimethyl-L-alanyl-L-prolyl-L-lysyl-[protein] + 3 S-adenosyl-L-homocysteine + 3 H(+). It catalyses the reaction N-terminal L-seryl-L-prolyl-L-lysyl-[protein] + 3 S-adenosyl-L-methionine = N-terminal N,N,N-trimethyl-L-seryl-L-prolyl-L-lysyl-[protein] + 3 S-adenosyl-L-homocysteine + 3 H(+). The enzyme catalyses N-terminal L-prolyl-L-prolyl-L-lysyl-[protein] + 2 S-adenosyl-L-methionine = N-terminal N,N-dimethyl-L-prolyl-L-prolyl-L-lysyl-[protein] + 2 S-adenosyl-L-homocysteine + 2 H(+). Distributive alpha-N-methyltransferase that methylates the N-terminus of target proteins containing the N-terminal motif [Ala/Gly/Pro/Ser]-Pro-Lys when the initiator Met is cleaved. Specifically catalyzes mono-, di- or tri-methylation of the exposed alpha-amino group of the Ala, Gly or Ser residue in the [Ala/Gly/Ser]-Pro-Lys motif and mono- or di-methylation of Pro in the Pro-Pro-Lys motif. Some of the substrates may be primed by NTMT2-mediated monomethylation. Catalyzes the trimethylation of the N-terminal Gly in CENPA (after removal of Met-1). Responsible for the N-terminal methylation of KLHL31, MYL2, MYL3, RB1, RCC1, RPL23A and SET. Required during mitosis for normal bipolar spindle formation and chromosome segregation via its action on RCC1. This Homo sapiens (Human) protein is N-terminal Xaa-Pro-Lys N-methyltransferase 1 (NTMT1).